We begin with the raw amino-acid sequence, 510 residues long: Light-independent protochlorophyllide reductase subunit B (510 aa).

[4Fe-4S] cluster is bound at residue Asp36. Residue Asp296 is the Proton donor of the active site. A substrate-binding site is contributed by 431-432; the sequence is GM.

Belongs to the ChlB/BchB/BchZ family. In terms of assembly, protochlorophyllide reductase is composed of three subunits; ChlL, ChlN and ChlB. Forms a heterotetramer of two ChlB and two ChlN subunits. The cofactor is [4Fe-4S] cluster.

Its subcellular location is the plastid. The protein resides in the chloroplast. It carries out the reaction chlorophyllide a + oxidized 2[4Fe-4S]-[ferredoxin] + 2 ADP + 2 phosphate = protochlorophyllide a + reduced 2[4Fe-4S]-[ferredoxin] + 2 ATP + 2 H2O. Its pathway is porphyrin-containing compound metabolism; chlorophyll biosynthesis (light-independent). Functionally, component of the dark-operative protochlorophyllide reductase (DPOR) that uses Mg-ATP and reduced ferredoxin to reduce ring D of protochlorophyllide (Pchlide) to form chlorophyllide a (Chlide). This reaction is light-independent. The NB-protein (ChlN-ChlB) is the catalytic component of the complex. This chain is Light-independent protochlorophyllide reductase subunit B, found in Auxenochlorella protothecoides (Green microalga).